A 608-amino-acid chain; its full sequence is MATENGAVELGIQSLSTDEASKGAASEESLAAEKDPAPPDPEKGPGPSDTKQDPDPSTPKKDANTPAPEKGDVVPAQPSAGGSQGPAGEGGQVEAPAEGSAGKPAALPQQTATAEASEKKPEAEKGPSGHQDPGEPTVGKKVAEGQAAARRGSPAFLHSPSCPAIIASTEKLPAQKPLSEASELIFEGVPATPGPTEPGPAKAEGGVDLLAESQKEAGEKAPGQADQAKVQGDTSRGIEFQAVPSERPRPEVGQALCLPAREEDCFQILDDCPPPPAPFPHRIVELRTGNVSSEFSMNSKEALGGGKFGAVCTCTEKSTGLKLAAKVIKKQTPKDKEMVMLEIEVMNQLNHRNLIQLYAAIETPHEIVLFMEYIEGGELFERIVDEDYHLTEVDTMVFVRQICDGILFMHKMRVLHLDLKPENILCVNTTGHLVKIIDFGLARRYNPNEKLKVNFGTPEFLSPEVVNYDQISDKTDMWSLGVITYMLLSGLSPFLGDDDTETLNNVLSGNWYFDEETFEAVSDEAKDFVSNLIVKEQGARMSAAQCLAHPWLNNLAEKAKRCNRRLKSQILLKKYLMKRRWKKNFIAVSAANRFKKISSSGALMALGV.

The interval 1–160 (MATENGAVEL…RGSPAFLHSP (160 aa)) is disordered. Alanine 2 is subject to N-acetylalanine. Basic and acidic residues-rich tracts occupy residues 31-43 (AAEK…DPEK) and 50-63 (TKQD…KKDA). Residues 82-91 (GSQGPAGEGG) are compositionally biased toward gly residues. The span at 116 to 127 (ASEKKPEAEKGP) shows a compositional bias: basic and acidic residues. Serine 153, serine 159, and serine 161 each carry phosphoserine. Positions 214 to 235 (QKEAGEKAPGQADQAKVQGDTS) are disordered. Residues 297-552 (MNSKEALGGG…AAQCLAHPWL (256 aa)) form the Protein kinase domain. ATP is bound by residues 303-311 (LGGGKFGAV) and lysine 326. The active-site Proton acceptor is aspartate 418. Threonine 457 carries the post-translational modification Phosphothreonine. The segment at 586–598 (IAVSAANRFKKIS) is calmodulin-binding.

It belongs to the protein kinase superfamily. CAMK Ser/Thr protein kinase family. As to quaternary structure, may interact with centrin.

It localises to the cytoplasm. It carries out the reaction L-seryl-[myosin light chain] + ATP = O-phospho-L-seryl-[myosin light chain] + ADP + H(+). The catalysed reaction is L-threonyl-[myosin light chain] + ATP = O-phospho-L-threonyl-[myosin light chain] + ADP + H(+). Functionally, implicated in the level of global muscle contraction and cardiac function. Phosphorylates a specific serine in the N-terminus of a myosin light chain. The polypeptide is Myosin light chain kinase 2, skeletal/cardiac muscle (MYLK2) (Oryctolagus cuniculus (Rabbit)).